A 51-amino-acid chain; its full sequence is Cytochrome b559 subunit beta (51 aa).

Residues 26 to 42 (WLAVHALTVPTIFFLGA) traverse the membrane as a helical segment. Heme is bound at residue H30.

The protein belongs to the PsbE/PsbF family. In terms of assembly, heterodimer of an alpha subunit and a beta subunit. PSII is composed of 1 copy each of membrane proteins PsbA, PsbB, PsbC, PsbD, PsbE, PsbF, PsbH, PsbI, PsbJ, PsbK, PsbL, PsbM, PsbT, PsbX, Psb30/Ycf12, peripheral proteins PsbO, CyanoQ (PsbQ), PsbU, PsbV and a large number of cofactors. It forms dimeric complexes. Requires heme b as cofactor.

It is found in the cell inner membrane. In terms of biological role, this b-type cytochrome is tightly associated with the reaction center of photosystem II (PSII). PSII is a light-driven water:plastoquinone oxidoreductase that uses light energy to abstract electrons from H(2)O, generating O(2) and a proton gradient subsequently used for ATP formation. It consists of a core antenna complex that captures photons, and an electron transfer chain that converts photonic excitation into a charge separation. The sequence is that of Cytochrome b559 subunit beta from Gloeobacter violaceus (strain ATCC 29082 / PCC 7421).